We begin with the raw amino-acid sequence, 124 residues long: Small ribosomal subunit protein eS6 (124 aa).

It belongs to the eukaryotic ribosomal protein eS6 family.

The sequence is that of Small ribosomal subunit protein eS6 from Methanococcus maripaludis (strain C6 / ATCC BAA-1332).